Here is a 323-residue protein sequence, read N- to C-terminus: Serine/threonine-protein kinase-transforming protein raf (323 aa).

Residues 24 to 284 (VMLSTRIGSG…PQILSSIELL (261 aa)) form the Protein kinase domain. Residues 30-38 (IGSGSFGTV) and lysine 50 contribute to the ATP site. The Proton acceptor role is filled by aspartate 143.

It belongs to the protein kinase superfamily. TKL Ser/Thr protein kinase family. RAF subfamily.

It carries out the reaction L-seryl-[protein] + ATP = O-phospho-L-seryl-[protein] + ADP + H(+). The enzyme catalyses L-threonyl-[protein] + ATP = O-phospho-L-threonyl-[protein] + ADP + H(+). The polypeptide is Serine/threonine-protein kinase-transforming protein raf (V-RAF) (Murine sarcoma virus 3611).